The sequence spans 858 residues: Tetratricopeptide repeat protein 7A (858 aa).

Position 51 is a phosphoserine (Ser51). TPR repeat units lie at residues 121-157 (CEAM…MENK), 177-210 (ERLP…AQVF), 414-447 (FHLW…RPSD), 497-531 (YSLQ…APSD), 533-565 (QVIL…RKDD), and 566-599 (AHAL…HPEN). Ser182 is modified (phosphoserine). Ser647, Ser678, Ser679, and Ser690 each carry phosphoserine. Thr693 carries the post-translational modification Phosphothreonine. TPR repeat units follow at residues 745–778 (HSVL…NPDG), 780–812 (RIMH…QSTC), and 813–846 (HEAW…EASS).

As to quaternary structure, component of a phosphatidylinositol 4-kinase (PI4K) complex, composed of PI4KA, EFR3 (EFR3A or EFR3B), TTC7 (TTC7A or TTC7B) and HYCC (HYCC1 or HYCC2). Interacts with PI4KA. Interaction with PI4KA is direct. Interacts with EFR3 (EFR3A or EFR3B), interaction is direct. Interacts with HYCC (HYCC1 or HYCC2), interaction is direct. Association with the PI4K complex is strongly reduced by TMEM150A. In terms of tissue distribution, expressed in epithelial cells of the intestine, thymus, and pancreas (at protein level).

The protein localises to the cytoplasm. Its subcellular location is the cell membrane. Component of a complex required to localize phosphatidylinositol 4-kinase (PI4K) to the plasma membrane. The complex acts as a regulator of phosphatidylinositol 4-phosphate (PtdIns(4)P) synthesis. In the complex, plays a central role in bridging PI4KA to EFR3B and HYCC1, via direct interactions. This chain is Tetratricopeptide repeat protein 7A, found in Homo sapiens (Human).